Here is a 374-residue protein sequence, read N- to C-terminus: MPDIKLKNQASLCASTRLFLAYTSIKPFDVAFHPKEPVVFSSLLTGQVCAWSYDDATGETSSSWSVRPSKRTARALSIEENGDEIWMGGKSGSLLCALTPPKVIQLSTRDGSMTRERDSAHECPINRVYCVNRNLVATGDDDGVIKLWDPRQADSIRTYSQHFDYISDFTYFDDKRQLVATSGDGHLSVIDIRSNKSTPLTVSEDQEDELLSIVPIKGGQKAIVGSGLGILSVWNRQMGWADSVDRIPGHPASIDAIVALTPDIIATGSEDGMIRVIQVLPHKFLGVVATHEEFPVERIRLDRNNKWLGSVSHDECLKLTDVEDLFEDSDEDDEMEEDEPDSDEEKSKKKKKDNGMKDMSRGQAENDGSFFADL.

7 WD repeats span residues 21–61, 68–107, 120–158, 161–200, 205–244, 249–287, and 290–330; these read AYTS…GETS, PSKR…IQLS, AHEC…SIRT, QHFD…STPL, DQED…ADSV, GHPA…FLGV, and THEE…EDSD. A compositionally biased stretch (acidic residues) spans 325 to 344; the sequence is LFEDSDEDDEMEEDEPDSDE. Residues 325 to 374 are disordered; sequence LFEDSDEDDEMEEDEPDSDEEKSKKKKKDNGMKDMSRGQAENDGSFFADL.

The protein belongs to the WD repeat WDR55 family.

It is found in the nucleus. Its subcellular location is the nucleolus. The polypeptide is WD repeat-containing protein JIP5 (JIP5) (Cryptococcus neoformans var. neoformans serotype D (strain B-3501A) (Filobasidiella neoformans)).